Reading from the N-terminus, the 693-residue chain is MKIFREVFELGNKEIILETGGMARQADGSVTVSCGNNVVLVTTVVKKSVADGTDFFPLSVHYLEKTYAAGKIPGGFLRREGRPSEEQILISRLIDRSIRPSFPDGFFNEIQIVATVLSYDGAFSPDILALIGASASLAISGAPYDDVVAGVRVGYTNGKYILNPNKQDLRDSDLDLVVSGTDDAILMVESEANSLPESVMLGGILYAHKHLKTIINSINRLAKVASKPRIEYSIYQINKFLKSQIKSQFFGEIKNAYTIASKQERNLKLNAIRKNVLEYIFSSDVDGNEYTEKEILEAFHDIEKDLVRSNILEGKPRIDGRCTETIRPINVKIGVLPGVHGSALFTRGETQALVVTTLGSDRDAQLVESLDGIEKCRYMLHYNFPPYSVGECGMVGMAPKRREIGHANLAKRATQAVFPNEEAYPYVVRVVSEILESNGSSSMATVCGSSLSMMDAGVPIAEPVAGIAMGLIKDGAKYAVLSDILGDEDHLGDMDFKVAGTRYGVTALQMDIKIKGISREILEQALEQARAGRLHILGIMNEVIKEHKEAVSDVAPQIHVMNINPAKIKDVVGRGGATVKGIVEKTGAQIDTSDSGEVKVFAKDKKSMDMAVAMIEEIVAEVEEGQVYKGKIVKLLDSGVFVNLLGSQDGYLPFSEIEQAGMKTNSLVEGQGLEVLVQNIDRGGRVKLSLVAR.

Asp489 and Asp495 together coordinate Mg(2+). The 60-residue stretch at 556–615 (PQIHVMNINPAKIKDVVGRGGATVKGIVEKTGAQIDTSDSGEVKVFAKDKKSMDMAVAMI) folds into the KH domain. In terms of domain architecture, S1 motif spans 625 to 693 (GQVYKGKIVK…GRVKLSLVAR (69 aa)).

The protein belongs to the polyribonucleotide nucleotidyltransferase family. As to quaternary structure, component of the RNA degradosome, which is a multiprotein complex involved in RNA processing and mRNA degradation. The cofactor is Mg(2+).

The protein resides in the cytoplasm. It carries out the reaction RNA(n+1) + phosphate = RNA(n) + a ribonucleoside 5'-diphosphate. Its function is as follows. Involved in mRNA degradation. Catalyzes the phosphorolysis of single-stranded polyribonucleotides processively in the 3'- to 5'-direction. The chain is Polyribonucleotide nucleotidyltransferase from Francisella tularensis subsp. tularensis (strain FSC 198).